The following is a 108-amino-acid chain: Parvalbumin beta 2 (108 aa).

An N-acetylserine modification is found at S2. EF-hand domains lie at 38–73 (KSSD…FSAS) and 77–108 (LTDA…MIKG). Ca(2+)-binding residues include D51, D53, S55, F57, E59, E62, D90, D92, D94, M96, and E101.

Belongs to the parvalbumin family.

Functionally, in muscle, parvalbumin is thought to be involved in relaxation after contraction. It binds two calcium ions. This is Parvalbumin beta 2 from Salmo salar (Atlantic salmon).